The sequence spans 158 residues: uncharacterized protein (158 aa).

Helical transmembrane passes span Leu10 to Phe30 and Tyr40 to Leu60.

The protein localises to the membrane. This is an uncharacterized protein from Schizosaccharomyces pombe (strain 972 / ATCC 24843) (Fission yeast).